Reading from the N-terminus, the 357-residue chain is Peptide chain release factor 1 (357 aa).

An N5-methylglutamine modification is found at Gln-235. Over residues 282–294 the composition is skewed to basic and acidic residues; that stretch reads RQKADTERSESRR. The disordered stretch occupies residues 282 to 308; it reads RQKADTERSESRRSQVGSGDRSERIRT.

This sequence belongs to the prokaryotic/mitochondrial release factor family. In terms of processing, methylated by PrmC. Methylation increases the termination efficiency of RF1.

Its subcellular location is the cytoplasm. Functionally, peptide chain release factor 1 directs the termination of translation in response to the peptide chain termination codons UAG and UAA. In Brucella anthropi (strain ATCC 49188 / DSM 6882 / CCUG 24695 / JCM 21032 / LMG 3331 / NBRC 15819 / NCTC 12168 / Alc 37) (Ochrobactrum anthropi), this protein is Peptide chain release factor 1.